The primary structure comprises 555 residues: Zinc transporter ZIP5 (555 aa).

The Extracellular segment spans residues 1-242 (MGGQTVWMTL…HSQASKTSEG (242 aa)). The tract at residues 108–148 (KHPSQSISHSHSHEDHHPSQGTTNSPPLRESLDAKSALSGS) is disordered. A helical transmembrane segment spans residues 243 to 263 (FLIALGWASLALLVISLPSLV). At 264–314 (ALGMAPLLQPSVLQVFLCPMAGMAVGTLCGDALLHLMPHAIFSQHTDHQNA) the chain is on the cytoplasmic side. A helical transmembrane segment spans residues 315–335 (VFKGLSVLGGLYLLFIFESLL). At 336-408 (GLKQHFKNLK…DGIHNLTDGL (73 aa)) the chain is on the extracellular side. Over residues 363–374 (TSSANQNESSGH) the composition is skewed to polar residues. A disordered region spans residues 363 to 383 (TSSANQNESSGHGHSHGQAEP). A helical transmembrane segment spans residues 409-429 (AIGVAFSQSLTGGFSTAIAVF). Over 430–452 (CHELPHELGDLAVLLSAGWPVRR) the chain is Cytoplasmic. Residues 453–473 (LLVFSGLSALLGFVGVLAGSA) form a helical membrane-spanning segment. The Extracellular portion of the chain corresponds to 474–482 (LGNHWASHS). The chain crosses the membrane as a helical span at residues 483–503 (PWILTLTAGVFLYVALADMMP). The Cytoplasmic segment spans residues 504 to 518 (EMLHGACGSVSPLKR). Residues 519–539 (FLLQALGLLTGGAIMLCIALF) form a helical membrane-spanning segment. Over 540–555 (EDHIAVSLGENSLGEN) the chain is Extracellular.

This sequence belongs to the ZIP transporter (TC 2.A.5) family.

It is found in the basolateral cell membrane. It carries out the reaction Zn(2+)(in) = Zn(2+)(out). Functionally, uniporter that transports zinc(2+) into polarized cells of enterocytes, pancreatic acinar and endoderm cells across the basolateral membrane and participates, notably, in zinc excretion from the intestine by the uptake of zinc from the blood into the intestine. The transport mechanism is temperature- and concentration-dependent and saturable. Mediates zinc homeostasis that is essential for venous angiogenesis. The protein is Zinc transporter ZIP5 (slc39a5) of Danio rerio (Zebrafish).